A 250-amino-acid polypeptide reads, in one-letter code: Cobalt transport protein CbiM (250 aa).

The first 27 residues, 1–27 (MKKPLFFIASACVTIYILFALSPSVYA), serve as a signal peptide directing secretion. 6 helical membrane passes run 33-53 (GFLP…FFLV), 70-90 (LLLA…IPSV), 102-122 (LGAL…VLLF), 134-154 (TLGA…YVLF), 168-188 (VFLA…IQLA), and 208-228 (IFAV…VVVW).

This sequence belongs to the CbiM family. In terms of assembly, forms an energy-coupling factor (ECF) transporter complex composed of an ATP-binding protein (A component, CbiO), a transmembrane protein (T component, CbiQ) and 2 possible substrate-capture proteins (S components, CbiM and CbiN) of unknown stoichimetry.

The protein localises to the cell membrane. It participates in cofactor biosynthesis; adenosylcobalamin biosynthesis. Part of the energy-coupling factor (ECF) transporter complex CbiMNOQ involved in cobalt import. The protein is Cobalt transport protein CbiM of Anoxybacillus flavithermus (strain DSM 21510 / WK1).